A 436-amino-acid chain; its full sequence is Methyl-accepting chemotaxis protein Amb0994 (436 aa).

The Cytoplasmic segment spans residues 1–8 (METTLGSY). Residues 9 to 29 (ARTLSLGMLVPSAICLLAGTF) form a helical membrane-spanning segment. Residue Gly30 is a topological domain, periplasmic. A helical transmembrane segment spans residues 31–51 (LLGGSSIALWVVIAVSLLGVV). The Cytoplasmic segment spans residues 52–436 (GGVKIGGSAR…DGFIARIGGR (385 aa)). A Methyl-accepting transducer domain is found at 180–416 (AATELEASSG…QVADAASELS (237 aa)). The residue at position 211 (Gln211) is a Glutamate methyl ester (Gln). Glu225 carries the post-translational modification Glutamate methyl ester (Glu). Residues 321–436 (TEDITSQVAH…DGFIARIGGR (116 aa)) are required for interaction with MamK and to respond to the magnetic field.

It belongs to the methyl-accepting chemotaxis (MCP) protein family. In terms of assembly, interacts with MamK at cell poles and septa.

It is found in the cell inner membrane. Probable methyl-accepting taxis protein. May be the receptor that senses the torque generated from the interaction between the magnetosome dipole moment and the external magnetic field. Overproduction interferes with magnetotaxis, cells respond more slowly to changes in the magnetic field; requires the MamK-interacting C-terminus of the protein. The effect of magnetic sensing is to control flagellar rotation. Functionally, chemotactic-signal transducers respond to changes in the concentration of attractants and repellents in the environment, transduce a signal from the outside to the inside of the cell, and facilitate sensory adaptation through variation of methylation levels. Attractants increase the level of methylation while repellents decrease the level of methylation. This is Methyl-accepting chemotaxis protein Amb0994 from Paramagnetospirillum magneticum (strain ATCC 700264 / AMB-1) (Magnetospirillum magneticum).